Here is a 264-residue protein sequence, read N- to C-terminus: QQPVSRQPQQIIPQQPQQPFPLQPQQPQPFPQQPIPQQPQPYPQQPQSFPQQPFPSQQPFPQQPPFWQQQPVLSQQQPCTQDQTPLLQEQQDQMLVQVQIPFVHPSILQQLNPCKVFLQQQCSPLAMSQRIARSQMLQQSSCHVLQQQCCQQLPQIPEQLRHEAVRAIVYSIVLQEQSLQLVQGVSQPQQQSQQQQVGQCSFQQPQPQQGQQQQVPQSVFLQPHQIAQLEATTSIALRTLPTMCSVNVPLYRIVPLAIDTRVGV.

Low complexity predominate over residues 1–15 (QQPVSRQPQQIIPQQ). The interval 1–66 (QQPVSRQPQQ…QQPFPQQPPF (66 aa)) is disordered. Composition is skewed to pro residues over residues 16-44 (PQQP…PYPQ) and 52-64 (QPFP…PQQP).

The protein belongs to the gliadin/glutenin family. Developing endosperm.

In terms of biological role, sulfur-rich seed storage protein. This Hordeum vulgare (Barley) protein is B3-hordein.